A 397-amino-acid chain; its full sequence is Acetate kinase 1 (397 aa).

Asn8 lines the Mg(2+) pocket. Residue Lys15 coordinates ATP. A substrate-binding site is contributed by Arg89. Residue Asp146 is the Proton donor/acceptor of the active site. Residues 206–210, 281–283, and 329–333 each bind ATP; these read HLGNG, DLR, and GIGEN. Residue Glu382 coordinates Mg(2+).

This sequence belongs to the acetokinase family. In terms of assembly, homodimer. It depends on Mg(2+) as a cofactor. Requires Mn(2+) as cofactor.

The protein localises to the cytoplasm. It catalyses the reaction acetate + ATP = acetyl phosphate + ADP. The protein operates within metabolic intermediate biosynthesis; acetyl-CoA biosynthesis; acetyl-CoA from acetate: step 1/2. In terms of biological role, catalyzes the formation of acetyl phosphate from acetate and ATP. Can also catalyze the reverse reaction. The chain is Acetate kinase 1 from Listeria innocua serovar 6a (strain ATCC BAA-680 / CLIP 11262).